The following is a 431-amino-acid chain: 5-methylthioadenosine/S-adenosylhomocysteine deaminase (431 aa).

His68 and His70 together coordinate Zn(2+). Substrate is bound by residues Glu97 and His186. A Zn(2+)-binding site is contributed by His213. Substrate is bound by residues Glu216 and Asp301. Residue Asp301 participates in Zn(2+) binding.

Belongs to the metallo-dependent hydrolases superfamily. MTA/SAH deaminase family. The cofactor is Zn(2+).

It catalyses the reaction S-adenosyl-L-homocysteine + H2O + H(+) = S-inosyl-L-homocysteine + NH4(+). It carries out the reaction S-methyl-5'-thioadenosine + H2O + H(+) = S-methyl-5'-thioinosine + NH4(+). In terms of biological role, catalyzes the deamination of 5-methylthioadenosine and S-adenosyl-L-homocysteine into 5-methylthioinosine and S-inosyl-L-homocysteine, respectively. Is also able to deaminate adenosine. The protein is 5-methylthioadenosine/S-adenosylhomocysteine deaminase of Halothermothrix orenii (strain H 168 / OCM 544 / DSM 9562).